The chain runs to 538 residues: Phosphoenolpyruvate carboxykinase (ATP) (538 aa).

Substrate-binding residues include Arg64, Tyr205, and Lys211. ATP contacts are provided by residues Lys211, His230, and 246–254 (GLSGTGKTT). Residues Lys211 and His230 each coordinate Mn(2+). Asp267 serves as a coordination point for Mn(2+). ATP contacts are provided by residues Glu295, Arg331, 447 to 448 (RI), and Thr453. Arg331 contributes to the substrate binding site.

It belongs to the phosphoenolpyruvate carboxykinase (ATP) family. As to quaternary structure, monomer. Mn(2+) is required as a cofactor.

Its subcellular location is the cytoplasm. The catalysed reaction is oxaloacetate + ATP = phosphoenolpyruvate + ADP + CO2. It functions in the pathway carbohydrate biosynthesis; gluconeogenesis. Its function is as follows. Involved in the gluconeogenesis. Catalyzes the conversion of oxaloacetate (OAA) to phosphoenolpyruvate (PEP) through direct phosphoryl transfer between the nucleoside triphosphate and OAA. In Haemophilus influenzae (strain ATCC 51907 / DSM 11121 / KW20 / Rd), this protein is Phosphoenolpyruvate carboxykinase (ATP).